The sequence spans 190 residues: Crossover junction endodeoxyribonuclease RuvC (190 aa).

Active-site residues include D7, E67, and D140. D7, E67, and D140 together coordinate Mg(2+).

This sequence belongs to the RuvC family. As to quaternary structure, homodimer which binds Holliday junction (HJ) DNA. The HJ becomes 2-fold symmetrical on binding to RuvC with unstacked arms; it has a different conformation from HJ DNA in complex with RuvA. In the full resolvosome a probable DNA-RuvA(4)-RuvB(12)-RuvC(2) complex forms which resolves the HJ. The cofactor is Mg(2+).

It is found in the cytoplasm. It catalyses the reaction Endonucleolytic cleavage at a junction such as a reciprocal single-stranded crossover between two homologous DNA duplexes (Holliday junction).. In terms of biological role, the RuvA-RuvB-RuvC complex processes Holliday junction (HJ) DNA during genetic recombination and DNA repair. Endonuclease that resolves HJ intermediates. Cleaves cruciform DNA by making single-stranded nicks across the HJ at symmetrical positions within the homologous arms, yielding a 5'-phosphate and a 3'-hydroxyl group; requires a central core of homology in the junction. The consensus cleavage sequence is 5'-(A/T)TT(C/G)-3'. Cleavage occurs on the 3'-side of the TT dinucleotide at the point of strand exchange. HJ branch migration catalyzed by RuvA-RuvB allows RuvC to scan DNA until it finds its consensus sequence, where it cleaves and resolves the cruciform DNA. The chain is Crossover junction endodeoxyribonuclease RuvC from Fusobacterium nucleatum subsp. nucleatum (strain ATCC 25586 / DSM 15643 / BCRC 10681 / CIP 101130 / JCM 8532 / KCTC 2640 / LMG 13131 / VPI 4355).